The chain runs to 298 residues: Golgi to ER traffic protein 2 (298 aa).

At 1–164 the chain is on the cytoplasmic side; that stretch reads MSEPVVDTAE…LEYNTYNQKL (164 aa). A disordered region spans residues 40-92; the sequence is ILSQGSSVKTSGVKSVLDQEKEATPSHDEDPEIQDITEITTPPPRTPPIGEDA. Residues 42–55 are compositionally biased toward low complexity; it reads SQGSSVKTSGVKSV. Basic and acidic residues predominate over residues 56 to 67; the sequence is LDQEKEATPSHD. The helical transmembrane segment at 165–185 threads the bilayer; it reads WKFRFLLVRVSVTLFNFFYHY. Residues 186 to 211 are Lumenal-facing; that stretch reads INLSNFHASNYAYVRDLSSEKYPVRD. A helical transmembrane segment spans residues 212–231; sequence FFTWFATTEVVLVAAYYSIF. Over 232-275 the chain is Cytoplasmic; it reads HSLGLFHAANQNSFVLKAMSMGSMVLPQLEHYKPLVARFLGYYE. Residues 276-296 traverse the membrane as a helical segment; the sequence is LLGIVLGDLSLVIVLFGLLSF. The Lumenal segment spans residues 297–298; that stretch reads AN.

The protein belongs to the GET2 family. As to quaternary structure, component of the Golgi to ER traffic (GET) complex, which is composed of GET1, GET2 and GET3. Within the complex, GET1 and GET2 form a heterotetramer which is stabilized by phosphatidylinositol binding and which binds to the GET3 homodimer.

It is found in the endoplasmic reticulum membrane. It localises to the golgi apparatus membrane. In terms of biological role, required for the post-translational delivery of tail-anchored (TA) proteins to the endoplasmic reticulum. Together with GET1, acts as a membrane receptor for soluble GET3, which recognizes and selectively binds the transmembrane domain of TA proteins in the cytosol. The GET complex cooperates with the HDEL receptor ERD2 to mediate the ATP-dependent retrieval of resident ER proteins that contain a C-terminal H-D-E-L retention signal from the Golgi to the ER. This is Golgi to ER traffic protein 2 from Candida albicans (strain SC5314 / ATCC MYA-2876) (Yeast).